The primary structure comprises 1984 residues: Sodium channel protein type 9 subunit alpha (1984 aa).

Residues 1–125 (MAMLPPPGPQ…RRISIKILVH (125 aa)) lie on the Cytoplasmic side of the membrane. Over residues 26–39 (RISEEKAKEHKDEK) the composition is skewed to basic and acidic residues. Residues 26–55 (RISEEKAKEHKDEKKDDEEEGPKPSSDLEA) form a disordered region. One copy of the I repeat lies at 112 to 410 (FSPLRRISIK…VAMAYEEQNQ (299 aa)). Residues 126–145 (SLFSMLIMCTILTNCIFMTL) traverse the membrane as a helical segment. Topologically, residues 146 to 150 (SNPPE) are extracellular. The helical transmembrane segment at 151-172 (WTKNVEYTFTGIYTFESLIKIL) threads the bilayer. The Cytoplasmic segment spans residues 173-185 (ARGFCVGEFTFLR). Residues 186 to 204 (DPWNWLDFVVIVFAYLTEF) form a helical membrane-spanning segment. At 205–210 (VNLGNV) the chain is on the extracellular side. N-linked (GlcNAc...) asparagine glycosylation occurs at asparagine 209. The chain crosses the membrane as a helical span at residues 211-227 (SALRTFRVLRALKTISV). Over 228 to 241 (IPGLKTIVGALIQS) the chain is Cytoplasmic. Residues 242–267 (VKKLSDVMILTVFCLSVFALIGLQLF) traverse the membrane as a helical segment. Residues 268–346 (MGNLKHKCFR…PDYGYTSFDT (79 aa)) are Extracellular-facing. A disulfide bridge connects residues cysteine 275 and cysteine 324. Residue asparagine 283 is glycosylated (N-linked (GlcNAc...) asparagine). An intramembrane region (pore-forming) is located at residues 347–363 (FSWAFLALFRLMTQDYW). Residues 364 to 376 (ENLYQQTLRAAGK) are Extracellular-facing. The helical transmembrane segment at 377–402 (TYMIFFVVVIFLGSFYLINLILAVVA) threads the bilayer. The Cytoplasmic segment spans residues 403–744 (MAYEEQNQAN…LIYFIVMDPF (342 aa)). The segment covering 461-471 (SSSETSRLSSK) has biased composition (low complexity). 2 disordered regions span residues 461 to 542 (SSSE…RGSL) and 576 to 609 (IFGD…RSPP). Positions 474 to 486 (KERRNRRKKKKQK) are enriched in basic residues. Basic and acidic residues predominate over residues 489–509 (SGEEKGDDEKLSKSGSEESIR). Residues 725-988 (CSPYWIKFKK…EEDTDANNLQ (264 aa)) form an II repeat. The helical transmembrane segment at 745 to 761 (VDLAITICIVLNTLFMA) threads the bilayer. The Extracellular portion of the chain corresponds to 762-770 (MEHHPMTEE). A helical membrane pass occupies residues 771–795 (FKNVLAVGNLIFTGIFAAEMVLKLI). Over 796–804 (AMDPYEYFQ) the chain is Cytoplasmic. The chain crosses the membrane as a helical span at residues 805-821 (VGWNIFDSLIVTLSLIE). The Extracellular portion of the chain corresponds to 822–830 (LFLADVEGL). The chain crosses the membrane as a helical span at residues 831-847 (SVLRSFRLLRVFKLAKS). Residues 848 to 864 (WPTLNMLIKIIGNSVGA) are Cytoplasmic-facing. The helical transmembrane segment at 865–887 (LGNLTLVLAIIVFIFAVVGMQLF) threads the bilayer. Residues 888-914 (GKSYKECVCKINVDCKLPRWHMNDFFH) are Extracellular-facing. A disulfide bond links cysteine 896 and cysteine 902. The pore-forming intramembrane region spans 915-927 (SFLIVFRVLCGEW). Residues 928 to 939 (IETMWDCMEVAG) lie on the Extracellular side of the membrane. A disulfide bridge connects residues cysteine 934 and cysteine 943. Residues 940–966 (QTMCLIVYMMVMVIGNLVVLNLFLALL) form a helical membrane-spanning segment. The Cytoplasmic segment spans residues 967-1185 (LSSFSSDNLT…WWTIRKTCYR (219 aa)). Disordered regions lie at residues 1015–1040 (KKPK…ISNR) and 1103–1145 (EELS…EPVN). Basic and acidic residues predominate over residues 1019 to 1035 (GSKDTKRTADPNNKKEN). A compositionally biased stretch (acidic residues) spans 1135 to 1145 (GEEEAEAEPVN). The III repeat unit spans residues 1178–1486 (TIRKTCYRIV…KKYYNAMKKL (309 aa)). The chain crosses the membrane as a helical span at residues 1186 to 1210 (IVEHSWFESFIVLMILLSSGALAFE). The Extracellular portion of the chain corresponds to 1211 to 1222 (DIYIEKKKTIKI). The helical transmembrane segment at 1223–1248 (ILEYADKIFTYIFILEMLLKWVAYGY) threads the bilayer. Over 1249 to 1250 (KT) the chain is Cytoplasmic. A helical transmembrane segment spans residues 1251–1276 (YFTNAWCWLDFLIVDVSLVTLVANTL). At 1277-1285 (GYSDLGPIK) the chain is on the extracellular side. Residues 1286 to 1302 (SLRTLRALRPLRALSRF) traverse the membrane as a helical segment. Over 1303 to 1315 (EGMRVVVNALIGA) the chain is Cytoplasmic. A helical membrane pass occupies residues 1316-1340 (IPSIMNVLLVCLIFWLIFSIMGVNL). Residues 1341–1392 (FAGKFYECVNTTDGSRFPTSQVANRSECFALMNVSGNVRWKNLKVNFDNVGL) lie on the Extracellular side of the membrane. A disulfide bond links cysteine 1348 and cysteine 1368. Asparagine 1350, asparagine 1364, and asparagine 1373 each carry an N-linked (GlcNAc...) asparagine glycan. Positions 1393 to 1403 (GYLSLLQVATF) form an intramembrane region, pore-forming. Residues 1404 to 1429 (KGWMDIMYAAVDSVNVNEQPKYEYSL) lie on the Extracellular side of the membrane. Residues 1430-1455 (YMYIYFVIFIIFGSFFTLNLFIGVII) traverse the membrane as a helical segment. Topologically, residues 1456-1512 (DNFNQQKKKLGGQDIFMTEEQKKYYNAMKKLGSKKPQKPIPRPGNKFQGCIFDLVTN) are cytoplasmic. Serine 1488 carries the phosphoserine; by PKC modification. The IV repeat unit spans residues 1495 to 1793 (IPRPGNKFQG…WEKFDPDATQ (299 aa)). Residues 1513-1532 (QAFDITIMVLICLNMVTMMV) form a helical membrane-spanning segment. The Extracellular portion of the chain corresponds to 1533 to 1543 (EKEGQTEYMDY). The chain crosses the membrane as a helical span at residues 1544-1565 (VLHWINMVFIILFTGECVLKLI). Topologically, residues 1566-1574 (SLRHYYFTV) are cytoplasmic. Residues 1575–1596 (GWNIFDFVVVILSIVGMFLAEM) form a helical membrane-spanning segment. The Extracellular segment spans residues 1597 to 1605 (IEKYFVSPT). Residues 1606–1625 (LFRVIRLARIGRILRLIKGA) traverse the membrane as a helical segment. Residues 1626-1638 (KGIRTLLFALMMS) lie on the Cytoplasmic side of the membrane. Residues 1639-1661 (LPALFNIGLLLFLVMFIYAIFGM) form a helical membrane-spanning segment. The Extracellular portion of the chain corresponds to 1662–1684 (SNFAYVKKEAGINDMFNFETFGN). The pore-forming intramembrane region spans 1685-1697 (SMICLFQITTSAG). The Extracellular segment spans residues 1698–1731 (WDGLLAPILNSAPPDCDPKKVHPGSSVEGDCGNP). Cysteine 1713 and cysteine 1728 are joined by a disulfide. A helical transmembrane segment spans residues 1732–1757 (SVGIFYFVSYIIISFLVVVNMYIAVI). Residues 1758 to 1984 (LENFSVATEE…EDKEKDESRK (227 aa)) are Cytoplasmic-facing. The IQ domain maps to 1887 to 1916 (EEVSATIIQRAYRRYRLRQHVKNISSIYIK). Over residues 1916–1930 (KDGDRDDDLPNKEDT) the composition is skewed to basic and acidic residues. The disordered stretch occupies residues 1916 to 1984 (KDGDRDDDLP…EDKEKDESRK (69 aa)). Residues 1946–1958 (VTASTISPPSYDS) are compositionally biased toward polar residues. Over residues 1960–1984 (TKPDQEKYETDKTEKEDKEKDESRK) the composition is skewed to basic and acidic residues.

The protein belongs to the sodium channel (TC 1.A.1.10) family. Nav1.7/SCN9A subfamily. The Nav1.7 voltage-gated sodium channel consists of an ion-conducting alpha subunit SCN9A which is functional on its own regulated by one or more beta-1 (SCN1B), beta-2 (SCN2B), beta-3 (SCN3B) and beta-4 (SCN4B) subunits. SCN1B and SCN3B are non-covalently associated with SCN9A. SCN2B and SCN4B are disulfide-linked to SCN9A. SCN1B regulates channel inactivation. Interacts with NEDD4 and NEDD4L; regulates Nav1.7 activity most probably through ubiquitination and subsequent endocytosis. Interacts with TMEM233; modulates the gating properties of NaV1.7. Phosphorylation at Ser-1488 by PKC in a highly conserved cytoplasmic loop increases peak sodium currents. In terms of processing, ubiquitinated by NEDD4L; which may promote its endocytosis. Does not seem to be ubiquitinated by NEDD4. Post-translationally, ubiquitinated by NEDD4L; which may promote its endocytosis. In terms of tissue distribution, expressed at high level in the dorsal root ganglion and at much lower levels in the brain, sciatic nerve, nodose ganglia, heart, thyroid and adrenal glands and Schwann cells, but not in the cardiac and skeletal muscles, brain and liver.

The protein resides in the cell membrane. It is found in the cell projection. The protein localises to the neuron projection. It localises to the axon. It carries out the reaction Na(+)(in) = Na(+)(out). Inhibited by the conotoxin GVIIJ. In terms of biological role, pore-forming subunit of Nav1.7, a voltage-gated sodium (Nav) channel that directly mediates the depolarizing phase of action potentials in excitable membranes. Navs, also called VGSCs (voltage-gated sodium channels) or VDSCs (voltage-dependent sodium channels), operate by switching between closed and open conformations depending on the voltage difference across the membrane. In the open conformation they allow Na(+) ions to selectively pass through the pore, along their electrochemical gradient. The influx of Na(+) ions provokes membrane depolarization, initiating the propagation of electrical signals throughout cells and tissues. Nav1.7 plays a crucial role in controlling the excitability and action potential propagation from nociceptor neurons, thereby contributing to the sensory perception of pain. This Rattus norvegicus (Rat) protein is Sodium channel protein type 9 subunit alpha.